The following is a 487-amino-acid chain: Probable aspartic-type endopeptidase opsB (487 aa).

A signal peptide spans 1–20 (MQKSWLVLLVACLGLQGTTA). The Peptidase A1 domain occupies 69-398 (YFCNITLGTP…DLSNNEISLA (330 aa)). Asn72 is a glycosylation site (N-linked (GlcNAc...) asparagine). Asp87 is a catalytic residue. N-linked (GlcNAc...) asparagine glycosylation is found at Asn99, Asn111, Asn132, and Asn272. The active site involves Asp286. Asn329 and Asn403 each carry an N-linked (GlcNAc...) asparagine glycan. Ala463 is lipidated: GPI-anchor amidated alanine. Residues 464 to 487 (PAGPTDVPKHLVLGAAAIGYVLAF) constitute a propeptide, removed in mature form.

This sequence belongs to the peptidase A1 family.

The protein localises to the cell membrane. Functionally, probable GPI-anchored aspartic-type endopeptidase. This chain is Probable aspartic-type endopeptidase opsB (opsB), found in Aspergillus oryzae (strain ATCC 42149 / RIB 40) (Yellow koji mold).